Reading from the N-terminus, the 650-residue chain is Chaperone protein DnaK (650 aa).

Thr-200 carries the post-translational modification Phosphothreonine; by autocatalysis. Residues 611–634 (AQQAGAAGAAGAAAEGASAQGGAQ) show a composition bias toward low complexity. The tract at residues 611-650 (AQQAGAAGAAGAAAEGASAQGGAQPPDDVVDADFKEVKKD) is disordered.

Belongs to the heat shock protein 70 family.

Acts as a chaperone. This is Chaperone protein DnaK from Burkholderia pseudomallei (strain 1710b).